Reading from the N-terminus, the 288-residue chain is UPF0494 membrane protein C212.04c (288 aa).

4 helical membrane passes run 107 to 127, 144 to 164, 174 to 194, and 198 to 218; these read WVLL…KFKI, IWGP…AFNY, PLIS…SVII, and IAGV…GVIA.

This sequence belongs to the UPF0494 family.

The protein resides in the cytoplasm. It localises to the endoplasmic reticulum. Its subcellular location is the membrane. In Schizosaccharomyces pombe (strain 972 / ATCC 24843) (Fission yeast), this protein is UPF0494 membrane protein C212.04c.